The sequence spans 245 residues: 1-(5-phosphoribosyl)-5-[(5-phosphoribosylamino)methylideneamino] imidazole-4-carboxamide isomerase (245 aa).

The active-site Proton acceptor is D7. The active-site Proton donor is the D129.

Belongs to the HisA/HisF family.

It localises to the cytoplasm. The enzyme catalyses 1-(5-phospho-beta-D-ribosyl)-5-[(5-phospho-beta-D-ribosylamino)methylideneamino]imidazole-4-carboxamide = 5-[(5-phospho-1-deoxy-D-ribulos-1-ylimino)methylamino]-1-(5-phospho-beta-D-ribosyl)imidazole-4-carboxamide. It participates in amino-acid biosynthesis; L-histidine biosynthesis; L-histidine from 5-phospho-alpha-D-ribose 1-diphosphate: step 4/9. This chain is 1-(5-phosphoribosyl)-5-[(5-phosphoribosylamino)methylideneamino] imidazole-4-carboxamide isomerase, found in Edwardsiella ictaluri (strain 93-146).